The primary structure comprises 327 residues: UDP-N-acetylenolpyruvoylglucosamine reductase (327 aa).

The FAD-binding PCMH-type domain maps to 42–223 (RTGGLAELFY…RAAMDEVALH (182 aa)). Arginine 188 is an active-site residue. Serine 237 functions as the Proton donor in the catalytic mechanism. Glutamate 307 is a catalytic residue.

Belongs to the MurB family. FAD serves as cofactor.

It is found in the cytoplasm. The catalysed reaction is UDP-N-acetyl-alpha-D-muramate + NADP(+) = UDP-N-acetyl-3-O-(1-carboxyvinyl)-alpha-D-glucosamine + NADPH + H(+). It participates in cell wall biogenesis; peptidoglycan biosynthesis. Cell wall formation. The polypeptide is UDP-N-acetylenolpyruvoylglucosamine reductase (Bartonella tribocorum (strain CIP 105476 / IBS 506)).